Here is a 389-residue protein sequence, read N- to C-terminus: MGYQAFTVQDAIERVRTLGLIGNEPVTAEEIGDGNLNLVFRIQAGEKRLILKQALPYAKVVGESWPLSLERAWIEQSALKEFAKVAVPFVPHVYHASKEEAFTVMEDLSHLTIVRGGLLEGEKYPLLAEHIGSYLARTLFYTSDFAVGPVAKKQIARQYYNPDLCDITEKLIFTDPFYDAETNAIEAGLEAEVDRIWNDAELKREVAKLEALFITKGDALLHGDLHTGSIFASAEETKVIDPEFAFYGPFGFDVGQFIAHLFFAAYPDYDRLRDERIKDIDTFWLTFASTFKALWEREAVEPFRKADGLVDDVLSTILQDALGFAGCELIRRTIGLALVADLEQISDSTVRLERKRHALRLGAALIKRRTECKTFTDLRNFDVTEELSR.

ATP is bound by residues N37, K52, and 106–108 (EDL). D224 contacts substrate. 241 to 243 (DPE) serves as a coordination point for ATP. R331 is a binding site for substrate.

It belongs to the methylthioribose kinase family. In terms of assembly, homodimer.

The catalysed reaction is 5-(methylsulfanyl)-D-ribose + ATP = 5-(methylsulfanyl)-alpha-D-ribose 1-phosphate + ADP + H(+). It participates in amino-acid biosynthesis; L-methionine biosynthesis via salvage pathway; S-methyl-5-thio-alpha-D-ribose 1-phosphate from S-methyl-5'-thioadenosine (hydrolase route): step 2/2. Its function is as follows. Catalyzes the phosphorylation of methylthioribose into methylthioribose-1-phosphate. The sequence is that of Methylthioribose kinase from Exiguobacterium sibiricum (strain DSM 17290 / CCUG 55495 / CIP 109462 / JCM 13490 / 255-15).